The sequence spans 369 residues: DNA replication and repair protein RecF (369 aa).

30-37 (GDNGSGKT) provides a ligand contact to ATP.

It belongs to the RecF family.

It localises to the cytoplasm. Its function is as follows. The RecF protein is involved in DNA metabolism; it is required for DNA replication and normal SOS inducibility. RecF binds preferentially to single-stranded, linear DNA. It also seems to bind ATP. The chain is DNA replication and repair protein RecF from Pseudomonas paraeruginosa (strain DSM 24068 / PA7) (Pseudomonas aeruginosa (strain PA7)).